A 125-amino-acid polypeptide reads, in one-letter code: Translation initiation factor 5A (125 aa).

Position 36 is a hypusine (Lys36).

This sequence belongs to the eIF-5A family.

Its subcellular location is the cytoplasm. Functionally, functions by promoting the formation of the first peptide bond. The protein is Translation initiation factor 5A (eIF5A) of Halorubrum lacusprofundi (strain ATCC 49239 / DSM 5036 / JCM 8891 / ACAM 34).